The following is a 577-amino-acid chain: Moesin (577 aa).

One can recognise an FERM domain in the interval 2–295 (PKTISVRVTT…GNHELYMRRR (294 aa)). Phosphoserine is present on Ser-74. N6-acetyllysine is present on Lys-79. Residue Lys-83 is modified to N6-succinyllysine. The [IL]-x-C-x-x-[DE] motif signature appears at 115–120 (IYCPPE). The residue at position 116 (Tyr-116) is a Phosphotyrosine. At Cys-117 the chain carries S-nitrosocysteine. N6-acetyllysine is present on residues Lys-139 and Lys-165. Disordered regions lie at residues 322–342 (LLEN…KIER), 358–419 (TKKA…QLAS), and 468–518 (STPH…NERV). Positions 358-401 (TKKAQQELEEQTRRALELEQERKRAQSEAEKLAKERQEAEEAKE) are enriched in basic and acidic residues. Residue Ser-407 is modified to Phosphoserine. Over residues 492 to 518 (AELRADAMAKDRSEEERTTEAEKNERV) the composition is skewed to basic and acidic residues. Ser-527 is subject to Phosphoserine. Thr-558 carries the post-translational modification Phosphothreonine; by ROCK2 and STK10.

As to quaternary structure, in resting T-cells, part of a PAG1-NHERF1-MSN complex which is disrupted upon TCR activation. Interacts with NHERF1. Interacts with PPP1R16B. Interacts with SELPLG and SYK; these interactions mediate the activation of SYK by SELPLG. Interacts with PDPN (via cytoplasmic domain); this interaction activates RHOA and promotes epithelial-mesenchymal transition. Interacts with SPN/CD43 cytoplasmic tail. Interacts with CD44. Interacts with ICAM2. Interacts with ICAM3 (via C-terminus). Interacts with PDZD8. Interacts with F-actin. Interacts with CD46. Interacts with PTPN6. Phosphorylation on Thr-558 by STK10 negatively regulates lymphocyte migration and polarization. Phosphorylation on Thr-558 is crucial for the formation of microvilli-like structures. Phosphorylation by ROCK2 suppresses the head-to-tail association of the N-terminal and C-terminal halves resulting in an opened conformation which is capable of actin and membrane-binding. In terms of processing, S-nitrosylation of Cys-117 is induced by interferon-gamma and oxidatively-modified low-densitity lipoprotein (LDL(ox)) implicating the iNOS-S100A8/9 transnitrosylase complex.

The protein localises to the cell membrane. The protein resides in the cytoplasm. It is found in the cytoskeleton. It localises to the apical cell membrane. Its subcellular location is the cell projection. The protein localises to the microvillus membrane. The protein resides in the microvillus. In terms of biological role, ezrin-radixin-moesin (ERM) family protein that connects the actin cytoskeleton to the plasma membrane and thereby regulates the structure and function of specific domains of the cell cortex. Tethers actin filaments by oscillating between a resting and an activated state providing transient interactions between moesin and the actin cytoskeleton. Once phosphorylated on its C-terminal threonine, moesin is activated leading to interaction with F-actin and cytoskeletal rearrangement. These rearrangements regulate many cellular processes, including cell shape determination, membrane transport, and signal transduction. The role of moesin is particularly important in immunity acting on both T and B-cells homeostasis and self-tolerance, regulating lymphocyte egress from lymphoid organs. Modulates phagolysosomal biogenesis in macrophages. Also participates in immunologic synapse formation. The sequence is that of Moesin from Mus musculus (Mouse).